Reading from the N-terminus, the 331-residue chain is MASTPKANVPKIDVSPLFGDNMEEKMKVARAIDAASRDTGFFYAVNHGVDVKRLSNKTREFHFSITDEEKWDLAIRAYNKEHQDQIRAGYYLSIPEKKAVESFCYLNPNFKPDHPLIQSKTPTHEVNVWPDEKKHPGFREFAEQYYWDVFGLSSALLRGYALALGKEEDFFSRHFKKEDALSSVVLIRYPYLNPIPPAAIKTAEDGTKLSFEWHEDVSLITVLYQSDVANLQVEMPQGYLDIEADDNAYLVNCGSYMAHITNNYYPAPIHRVKWVNEERQSLPFFVNLGFNDTVQPWDPSKEDGKTDQRPISYGDYLQNGLVSLINKNGQT.

Isopenicillin N-binding residues include Arg87, Tyr91, Ser183, and Tyr189. N-[(5S)-5-amino-5-carboxypentanoyl]-L-cysteinyl-D-valine is bound by residues Arg87, Tyr91, Ser183, Tyr189, His214, and Asp216. In terms of domain architecture, Fe2OG dioxygenase spans 176–288; it reads KKEDALSSVV…RQSLPFFVNL (113 aa). Fe(2+) is bound by residues His214, Asp216, and His270. 2-oxoglutarate is bound at residue Arg279. Ser281 is an isopenicillin N binding site. An N-[(5S)-5-amino-5-carboxypentanoyl]-L-cysteinyl-D-valine-binding site is contributed by Ser281.

The protein belongs to the iron/ascorbate-dependent oxidoreductase family. In terms of assembly, monomer. Fe(2+) serves as cofactor.

The protein resides in the cytoplasm. It localises to the cytosol. The catalysed reaction is N-[(5S)-5-amino-5-carboxypentanoyl]-L-cysteinyl-D-valine + O2 = isopenicillin N + 2 H2O. The protein operates within antibiotic biosynthesis; penicillin G biosynthesis; penicillin G from L-alpha-aminoadipate and L-cysteine and L-valine: step 2/3. Isopenicillin N synthase; part of the gene cluster that mediates the biosynthesis of penicillin, the world's most important antibiotic. IpnA catalyzes the cyclization of the tripeptide N-[(5S)-5-amino-5-carboxypentanoyl]-L-cysteinyl-D-valine (LLD-ACV or ACV) to form isopenicillin N (IPN) that contains the beta-lactam nucleus. The penicillin biosynthesis occurs via 3 enzymatic steps, the first corresponding to the production of the tripeptide N-[(5S)-5-amino-5-carboxypentanoyl]-L-cysteinyl-D-valine (LLD-ACV or ACV) by the NRPS acvA. The tripeptide ACV is then cyclized to isopenicillin N (IPN) by the isopenicillin N synthase ipnA that forms the beta-lactam nucleus. Finally, the alpha-aminoadipyl side chain is exchanged for phenylacetic acid by the isopenicillin N acyltransferase aatA to yield penicillin in the peroxisomal matrix. The sequence is that of Isopenicillin N synthase from Penicillium chrysogenum (Penicillium notatum).